A 149-amino-acid chain; its full sequence is Large ribosomal subunit protein bL9 (149 aa).

The protein belongs to the bacterial ribosomal protein bL9 family.

Binds to the 23S rRNA. The chain is Large ribosomal subunit protein bL9 from Histophilus somni (strain 129Pt) (Haemophilus somnus).